Reading from the N-terminus, the 556-residue chain is Glutamine--tRNA ligase (556 aa).

Positions 34–44 (PEPNGYLHIGH) match the 'HIGH' region motif. Residues 35–37 (EPN) and 41–47 (HIGHAKS) contribute to the ATP site. Residues Asp67 and Tyr212 each contribute to the L-glutamine site. ATP-binding positions include Thr231, 261–262 (RL), and 269–271 (MSK). The 'KMSKS' region signature appears at 268–272 (IMSKR).

It belongs to the class-I aminoacyl-tRNA synthetase family. Monomer.

The protein resides in the cytoplasm. It carries out the reaction tRNA(Gln) + L-glutamine + ATP = L-glutaminyl-tRNA(Gln) + AMP + diphosphate. The sequence is that of Glutamine--tRNA ligase from Sodalis glossinidius (strain morsitans).